The chain runs to 104 residues: Inner membrane protein YjcH (104 aa).

Residues 1 to 24 (MNGTIYQRIEDNAHFRELVEKRQR) are Cytoplasmic-facing. A helical transmembrane segment spans residues 25–47 (FATILSIIMLAVYIGFILLIAFA). Over 48 to 61 (PGWLGTPLNPNTSV) the chain is Periplasmic. Residues 62–84 (TRGIPIGVGVIVISFVLTGIYIW) traverse the membrane as a helical segment. Over 85 to 104 (RANGEFDRLNNEVLHEVQAS) the chain is Cytoplasmic.

Its subcellular location is the cell inner membrane. This Escherichia coli (strain K12) protein is Inner membrane protein YjcH (yjcH).